A 262-amino-acid polypeptide reads, in one-letter code: Snake venom serine protease (262 aa).

Positions 1-18 are cleaved as a signal peptide; it reads MVLIRVLANLLILQLSYA. Residues 19–24 constitute a propeptide that is removed on maturation; that stretch reads QKSSEL. The Peptidase S1 domain maps to 25 to 253; sequence VIGGDECNIN…YTEWIQSIIA (229 aa). Cystine bridges form between Cys-31/Cys-167, Cys-50/Cys-66, Cys-102/Cys-260, Cys-146/Cys-214, Cys-178/Cys-193, and Cys-204/Cys-229. Residues His-65 and Asp-114 each act as charge relay system in the active site. Residues Asn-125 and Asn-158 are each glycosylated (N-linked (GlcNAc...) asparagine). Ser-208 serves as the catalytic Charge relay system.

This sequence belongs to the peptidase S1 family. Snake venom subfamily. As to quaternary structure, monomer. As to expression, expressed by the venom gland.

The protein localises to the secreted. In terms of biological role, snake venom serine protease that may act in the hemostasis system of the prey. This chain is Snake venom serine protease, found in Crotalus durissus durissus (Central American rattlesnake).